Reading from the N-terminus, the 183-residue chain is Large ribosomal subunit protein eL18 (183 aa).

Positions 146 to 183 (HFGPAPGVPHSHTKPYVRSKGRKFEKARGRRKSRGFRV) are disordered. Composition is skewed to basic residues over residues 156–166 (SHTKPYVRSKG) and 173–183 (RGRRKSRGFRV).

This sequence belongs to the eukaryotic ribosomal protein eL18 family.

The chain is Large ribosomal subunit protein eL18 (RPL18) from Cicer arietinum (Chickpea).